The sequence spans 440 residues: Origin recognition complex subunit 4 (440 aa).

Position 64–71 (64–71 (GPKGSGKS)) interacts with ATP.

This sequence belongs to the ORC4 family. As to quaternary structure, ORC is composed of six subunits.

The protein resides in the nucleus. In terms of biological role, component of the origin recognition complex (ORC) that binds origins of replication. DNA-binding is ATP-dependent, however specific DNA sequences that define origins of replication have not been identified so far. ORC is required to assemble the pre-replication complex necessary to initiate DNA replication. This chain is Origin recognition complex subunit 4 (orcD), found in Dictyostelium discoideum (Social amoeba).